The sequence spans 635 residues: Threonine--tRNA ligase (635 aa).

In terms of domain architecture, TGS spans 1 to 61 (MVSIRLPDGS…DRDASLAIVT (61 aa)). Residues 242–533 (DHRKLGKQLD…LIEHHAGAMP (292 aa)) are catalytic. The Zn(2+) site is built by Cys333, His384, and His510.

It belongs to the class-II aminoacyl-tRNA synthetase family. Homodimer. It depends on Zn(2+) as a cofactor.

The protein resides in the cytoplasm. It carries out the reaction tRNA(Thr) + L-threonine + ATP = L-threonyl-tRNA(Thr) + AMP + diphosphate + H(+). Catalyzes the attachment of threonine to tRNA(Thr) in a two-step reaction: L-threonine is first activated by ATP to form Thr-AMP and then transferred to the acceptor end of tRNA(Thr). Also edits incorrectly charged L-seryl-tRNA(Thr). This chain is Threonine--tRNA ligase, found in Burkholderia orbicola (strain MC0-3).